A 274-amino-acid chain; its full sequence is NADPH-dependent 7-cyano-7-deazaguanine reductase (274 aa).

Positions 1–33 (MPKKDALDHLSLGQHTDYPNEYDPKQLQPVPRS) are disordered. 84-86 (IES) is a substrate binding site. 86-87 (SK) is a binding site for NADPH. Cys183 functions as the Thioimide intermediate in the catalytic mechanism. The active-site Proton donor is the Asp190. A substrate-binding site is contributed by 222–223 (HE). Residue 250-251 (RG) coordinates NADPH.

The protein belongs to the GTP cyclohydrolase I family. QueF type 2 subfamily. In terms of assembly, homodimer.

It localises to the cytoplasm. It catalyses the reaction 7-aminomethyl-7-carbaguanine + 2 NADP(+) = 7-cyano-7-deazaguanine + 2 NADPH + 3 H(+). The protein operates within tRNA modification; tRNA-queuosine biosynthesis. Functionally, catalyzes the NADPH-dependent reduction of 7-cyano-7-deazaguanine (preQ0) to 7-aminomethyl-7-deazaguanine (preQ1). The polypeptide is NADPH-dependent 7-cyano-7-deazaguanine reductase (Idiomarina loihiensis (strain ATCC BAA-735 / DSM 15497 / L2-TR)).